A 335-amino-acid polypeptide reads, in one-letter code: Ornithine carbamoyltransferase (335 aa).

Residues 56–59 (STRT), glutamine 83, arginine 107, and 134–137 (HPTQ) each bind carbamoyl phosphate. L-ornithine contacts are provided by residues asparagine 168, aspartate 232, and 236–237 (SM). Residues 274 to 275 (CL) and arginine 320 each bind carbamoyl phosphate.

This sequence belongs to the aspartate/ornithine carbamoyltransferase superfamily. OTCase family.

The protein localises to the cytoplasm. The enzyme catalyses carbamoyl phosphate + L-ornithine = L-citrulline + phosphate + H(+). It functions in the pathway amino-acid biosynthesis; L-arginine biosynthesis; L-arginine from L-ornithine and carbamoyl phosphate: step 1/3. Its function is as follows. Reversibly catalyzes the transfer of the carbamoyl group from carbamoyl phosphate (CP) to the N(epsilon) atom of ornithine (ORN) to produce L-citrulline. The chain is Ornithine carbamoyltransferase from Yersinia pseudotuberculosis serotype I (strain IP32953).